The following is a 385-amino-acid chain: cAMP-dependent protein kinase regulatory subunit (385 aa).

Residues 1 to 22 (MSSTGFTSPFGNANPFGSSGRS) show a composition bias toward polar residues. Disordered stretches follow at residues 1–51 (MSST…GVKN) and 77–111 (DFPA…PVHP). The segment at 1–128 (MSSTGFTSPF…RLKKAISGNF (128 aa)) is dimerization and phosphorylation. Residue Ser89 is modified to Phosphoserine. Residues 129–260 (LFNH…EEVP), Glu207, Arg216, 261–378 (ILKT…EAEE), Glu328, and Arg337 contribute to the 3',5'-cyclic AMP site.

It belongs to the cAMP-dependent kinase regulatory chain family. Tetramer, composed of 2 regulatory (R) and 2 catalytic (C) subunits. In the presence of cAMP it dissociates into 2 active monomeric C subunits and an R dimer.

This Neurospora crassa (strain ATCC 24698 / 74-OR23-1A / CBS 708.71 / DSM 1257 / FGSC 987) protein is cAMP-dependent protein kinase regulatory subunit (mcb).